The chain runs to 199 residues: NAD(P)H dehydrogenase (quinone) (199 aa).

The Flavodoxin-like domain occupies 4-190 (VLVLYYSAYG…AGARYQGKTI (187 aa)). Residues 10–15 (SAYGHI) and 78–80 (TRF) each bind FMN. Tyrosine 12 contributes to the NAD(+) binding site. Tryptophan 98 provides a ligand contact to substrate. Residues 113–119 (STATQHG) and histidine 134 each bind FMN.

Belongs to the WrbA family. The cofactor is FMN.

It carries out the reaction a quinone + NADH + H(+) = a quinol + NAD(+). The enzyme catalyses a quinone + NADPH + H(+) = a quinol + NADP(+). The protein is NAD(P)H dehydrogenase (quinone) of Rhodopseudomonas palustris (strain TIE-1).